The sequence spans 556 residues: MGVHSFLCSSPWFRMVTDLQKEIQEAVQQRRNFAIISHPDAGKTTLTEKLLLYGGAIQEAGAVKAKRSQRAATSDWMELEKQRGISITSTVLQFNYHDCTINLLDTPGHQDFSEDTYRTLAAADNAVMLEDAAKGLEPQTRKLFEVCRMRNIPIFTFFNKMDRPGREPLELLDEIEQELGLQTYAVNWPIGSGDRFRGVFDRRKQQVHLFERSVHGKRQAKDTTLEWGDPQLADLIEPDLLQQLQDELELLEGVGTEFDLEAIHAGQLTPVFWGSAMTNFGVELFLEAFLDYALKPGARRSSVGDMAPDYPEFSGFVFKLQANMDPRHRDRIAFVRVCTGKFEKDMTVQHARSGRTLRLSRPQKLFGQDREVLDDAYPGDMIGLNNPGMFAIGDTIYTGKRLEYDGIPCFSPEIFAYLRNPNPSKFKPFRKGVSELREEGAVQIMYSADSAKRDSILAAVGQLQLEVVQYRLENEYGVETLLEPLPFSVARWVEGGWDVLEKVGRLFNTTTVKDTWGRPVLLFKNEWNLRQIEADHPELQLRSVAPVAAGQKPIEV.

The tr-type G domain occupies 28-297 (QQRRNFAIIS…AFLDYALKPG (270 aa)). GTP is bound by residues 37–44 (SHPDAGKT), 105–109 (DTPGH), and 159–162 (NKMD).

Belongs to the TRAFAC class translation factor GTPase superfamily. Classic translation factor GTPase family. PrfC subfamily.

The protein localises to the cytoplasm. Increases the formation of ribosomal termination complexes and stimulates activities of RF-1 and RF-2. It binds guanine nucleotides and has strong preference for UGA stop codons. It may interact directly with the ribosome. The stimulation of RF-1 and RF-2 is significantly reduced by GTP and GDP, but not by GMP. In Synechococcus sp. (strain ATCC 27144 / PCC 6301 / SAUG 1402/1) (Anacystis nidulans), this protein is Peptide chain release factor 3.